The sequence spans 2769 residues: Thyroglobulin (2769 aa).

Residues 1-19 form the signal peptide; sequence MALALWVFGLLDLICLASA. Tyr24 carries the iodotyrosine; alternate modification. Residue Tyr24 is modified to Sulfotyrosine; alternate. Tyr24 carries the post-translational modification Thyroxine; alternate. Tyr24 is modified (triiodothyronine; alternate). Thyroglobulin type-1 domains follow at residues 31–92, 93–160, 161–297, and 298–358; these read LRPC…PAAC, LSFC…PARC, PRSC…RFRC, and PTKC…PPSC. Intrachain disulfides connect Cys34–Cys52, Cys63–Cys70, Cys72–Cys92, Cys96–Cys120, Cys131–Cys138, Cys140–Cys160, Cys164–Cys183, and Cys194–Cys235. Tyr108 is subject to Iodotyrosine. A glycan (N-linked (GlcNAc...) (complex) asparagine; alternate) is linked at Asn110. N-linked (GlcNAc...) (hybrid) asparagine; alternate glycosylation is present at Asn110. An Iodotyrosine; alternate modification is found at Tyr149. A Diiodotyrosine; alternate modification is found at Tyr149. An iodotyrosine mark is found at Tyr234 and Tyr258. 9 disulfides stabilise this stretch: Cys301–Cys319, Cys330–Cys336, Cys338–Cys358, Cys364–Cys619, Cys408–Cys607, Cys630–Cys635, Cys637–Cys657, Cys661–Cys686, and Cys697–Cys702. Asn483 and Asn495 each carry an N-linked (GlcNAc...) (complex) asparagine; alternate glycan. 2 N-linked (GlcNAc...) (hybrid) asparagine; alternate glycosylation sites follow: Asn483 and Asn495. Thyroglobulin type-1 domains follow at residues 604–657, 658–725, 726–921, 922–1073, 1074–1145, and 1146–1210; these read SQGC…RPRC, PTEC…PKKC, PSPC…VPAC, PGSC…IPQC, PTSC…SAQC, and PSLC…QPAC. Tyr703 is modified (iodotyrosine; alternate). Residue Tyr703 is modified to Thyroxine; alternate. Tyr703 bears the Triiodothyronine; alternate mark. Diiodotyrosine; alternate is present on Tyr703. Disulfide bonds link Cys704–Cys725, Cys729–Cys762, Cys773–Cys898, Cys900–Cys921, Cys925–Cys1031, Cys1042–Cys1049, Cys1051–Cys1073, Cys1077–Cys1108, Cys1126–Cys1145, Cys1149–Cys1169, Cys1181–Cys1188, Cys1190–Cys1210, Cys1215–Cys1264, Cys1231–Cys1245, Cys1306–Cys1356, and Cys1331–Cys1347. Tyr784 carries the post-translational modification Iodotyrosine. N-linked (GlcNAc...) (complex) asparagine; alternate glycosylation occurs at Asn853. The N-linked (GlcNAc...) (hybrid) asparagine; alternate glycan is linked to Asn853. Tyr866 bears the Iodotyrosine; alternate mark. At Tyr866 the chain carries Diiodotyrosine; alternate. The residue at position 883 (Tyr883) is a Diiodotyrosine. Asn947 carries N-linked (GlcNAc...) (complex) asparagine; alternate glycosylation. Asn947 is a glycosylation site (N-linked (GlcNAc...) (hybrid) asparagine; alternate). Tyr992 is subject to Iodotyrosine; alternate. Position 992 is a diiodotyrosine; alternate (Tyr992). Asn1140 is a glycosylation site (N-linked (GlcNAc...) (complex) asparagine; alternate). N-linked (GlcNAc...) (hybrid) asparagine; alternate glycosylation is present at Asn1140. Tyr1310 carries the post-translational modification Iodotyrosine. The residue at position 1310 (Tyr1310) is a Thyroxine. Asn1365 carries an N-linked (GlcNAc...) (high mannose) asparagine glycan. 13 disulfides stabilise this stretch: Cys1441/Cys1461, Cys1464/Cys1475, Cys1478/Cys1492, Cys1495/Cys1512, Cys1516/Cys1525, Cys1545/Cys1567, Cys1605/Cys1629, Cys1609/Cys1615, Cys1641/Cys1664, Cys1726/Cys1751, Cys1730/Cys1736, Cys1735/Cys1836, and Cys1762/Cys1779. Type II repeat units lie at residues 1458 to 1471, 1472 to 1488, and 1489 to 1505; these read ALGCVKCPEGSYFQ, DEQCIPCPAGFYQEQAG, and SLACVPCPEGRTTVYAG. Iodotyrosine; alternate is present on Tyr1469. Residue Tyr1469 is modified to Diiodotyrosine; alternate. The Thyroglobulin type-1 11 domain occupies 1513 to 1567; sequence VTDCQKNEVGLQCDQDSQYRASQRDRTSGKAFCVDGEGRRLPWTEAEAPLVDAQC. Residues 1605–1725 form a Type IIIA repeat; it reads CLADCALDEA…GASLAEVHLF (121 aa). The stretch at 1726–1893 is one Type IIIB repeat; it reads CLLACDHDSC…LFSLQQANLW (168 aa). Asn1776 carries an N-linked (GlcNAc...) (complex) asparagine; alternate glycan. The N-linked (GlcNAc...) (hybrid) asparagine; alternate glycan is linked to Asn1776. A compositionally biased stretch (basic and acidic residues) spans 1827–1842; sequence MGSRSESMGCRRDTEP. Residues 1827–1851 are disordered; sequence MGSRSESMGCRRDTEPRPASPSETD. N-linked (GlcNAc...) (complex) asparagine; alternate glycosylation is present at Asn1870. Residue Asn1870 is glycosylated (N-linked (GlcNAc...) (hybrid) asparagine; alternate). Disulfide bonds link Cys1894–Cys1920, Cys1898–Cys1905, Cys1929–Cys1940, Cys1997–Cys2025, Cys2001–Cys2007, Cys2006–Cys2077, and Cys2036–Cys2049. The Type IIIA repeat unit spans residues 1894–1996; sequence CLSRCAGEPS…DKSISSGFFE (103 aa). The Type IIIB repeat unit spans residues 1997-2130; the sequence is CERLCDMDPC…VGNFSAARDR (134 aa). Asn2014 carries N-linked (GlcNAc...) (high mannose) asparagine glycosylation. An N-linked (GlcNAc...) (high mannose) asparagine glycan is attached at Asn2123. 3 disulfide bridges follow: Cys2131–Cys2155, Cys2135–Cys2141, and Cys2164–Cys2173. The Type IIIA repeat unit spans residues 2131–2188; the sequence is CLWECSRHQDCLVTTLQTQPGAVRCMFYADTQSCTHSLQAQNCRLLLHEEATYIYRKP. Tyr2185 carries the iodotyrosine modification. The segment at 2189–2769 is cholinesterase-like (ChEL); it reads NIPLPGFGTS…PELASKTYSK (581 aa). Residue Asn2251 is glycosylated (N-linked (GlcNAc...) (complex) asparagine; alternate). A glycan (N-linked (GlcNAc...) (hybrid) asparagine; alternate) is linked at Asn2251. N-linked (GlcNAc...) (high mannose) asparagine glycosylation is present at Asn2296. A disulfide bridge links Cys2443 with Cys2454. Tyr2541 is modified (thyroxine). At Tyr2574 the chain carries Iodotyrosine; alternate. Tyr2574 bears the Thyroxine; alternate mark. Tyr2574 carries the post-translational modification Triiodothyronine; alternate. Position 2574 is a diiodotyrosine; alternate (Tyr2574). Iodotyrosine occurs at positions 2588 and 2618. An intrachain disulfide couples Cys2592 to Cys2716. Tyr2698 is modified (diiodotyrosine). A disordered region spans residues 2730 to 2769; that stretch reads ADETKDGPSADSEEEDQPAGSGLTEDLLGLPELASKTYSK. Tyr2767 is modified (iodotyrosine; alternate). Tyr2767 is modified (thyroxine; alternate). Triiodothyronine; alternate is present on Tyr2767. Tyr2767 is subject to Diiodotyrosine; alternate.

Belongs to the type-B carboxylesterase/lipase family. In terms of assembly, monomer. Homodimer (via ChEL region); occurs in the endoplasmic reticulum and is required for export to the Golgi apparatus. Homooligomer; disulfide-linked; stored in this form in the thyroid follicle lumen. Post-translationally, iodinated on tyrosine residues by TPO. There are 4 pairs of iodinated tyrosines used for coupling: acceptor Tyr-24 is coupled to donor Tyr-149 or Tyr-234, acceptor Tyr-2574 is coupled to donor Tyr-2541, acceptor Tyr-2767 in monomer 1 is coupled to donor Tyr-2767 in monomer 2 and acceptor Tyr-1310 in monomer 1 is coupled to donor Tyr-108 in monomer 2. In terms of processing, sulfated tyrosines are desulfated during iodination. Undergoes sequential proteolysis by cathepsins to release thyroxine (T4) and triiodothyronine (T3) hormones. In the thyroid follicle lumen, cross-linked TG (storage form) is solubilized by limited proteolysis mediated by cathepsins CTSB and/or CTSL. Partially cleaved TG is further processed by CTSK/cathepsin K and/or CTSL resulting in the release of T4. Following endocytosis, further processing occurs leading to the release of T3 and more T4 hormones. Specifically expressed in the thyroid gland.

The protein localises to the secreted. Its function is as follows. Acts as a substrate for the production of iodinated thyroid hormones thyroxine (T4) and triiodothyronine (T3). The synthesis of T3 and T4 involves iodination of selected tyrosine residues of TG/thyroglobulin followed by their oxidative coupling. Following TG re-internalization and lysosomal-mediated proteolysis, T3 and T4 are released from the polypeptide backbone leading to their secretion into the bloodstream. One dimer produces 7 thyroid hormone molecules. The sequence is that of Thyroglobulin (TG) from Bos taurus (Bovine).